Reading from the N-terminus, the 715-residue chain is Zinc finger protein 544 (715 aa).

The 72-residue stretch at 14–85 (VCFEDVAMAF…EQEAPRDWKA (72 aa)) folds into the KRAB domain. Residues Lys-273 and Lys-289 each participate in a glycyl lysine isopeptide (Lys-Gly) (interchain with G-Cter in SUMO2) cross-link. A C2H2-type 1; atypical zinc finger spans residues 354 to 374 (SVCNQCGKSFSCCKLIHQRTH). C2H2-type zinc fingers lie at residues 380 to 402 (FECT…QRTH), 408 to 430 (YECD…QRIH), 436 to 458 (YQCI…QRIH), 464 to 486 (YECT…KRTH), 492 to 514 (FKCT…QRTH), 520 to 542 (YECN…QRIH), 548 to 570 (YQCI…QRIH), 576 to 598 (YDCT…KRTH), 604 to 626 (YECN…LQIH), 632 to 654 (YKCN…QRTH), 660 to 682 (FECS…HRIH), and 688 to 710 (YECS…RRTH). Lys-534 is covalently cross-linked (Glycyl lysine isopeptide (Lys-Gly) (interchain with G-Cter in SUMO2)).

This sequence belongs to the krueppel C2H2-type zinc-finger protein family.

It localises to the nucleus. May be involved in transcriptional regulation. The chain is Zinc finger protein 544 (ZNF544) from Homo sapiens (Human).